Consider the following 419-residue polypeptide: Creatine kinase S-type, mitochondrial (419 aa).

A mitochondrion-targeting transit peptide spans 1 to 39 (MAGTFGRLLAGRVTAALFAAAGSGVLTTGYLLNQQNVKA). A Phosphagen kinase N-terminal domain is found at 46-132 (KLFPPSADYP…FDPVIKARHN (87 aa)). Residues 159-401 (YVLSSRVRTG…NYLVDCEKKL (243 aa)) form the Phosphagen kinase C-terminal domain. ATP is bound by residues 162-166 (SSRVR), His225, Arg270, Arg326, 354-359 (RGTGGV), and Asp369.

This sequence belongs to the ATP:guanido phosphotransferase family. Exists as an octamer composed of four MTCK homodimers. In terms of tissue distribution, expressed in the leg muscle and heart.

It localises to the mitochondrion inner membrane. It catalyses the reaction creatine + ATP = N-phosphocreatine + ADP + H(+). Its function is as follows. Reversibly catalyzes the transfer of phosphate between ATP and various phosphogens (e.g. creatine phosphate). Creatine kinase isoenzymes play a central role in energy transduction in tissues with large, fluctuating energy demands, such as skeletal muscle, heart, brain and spermatozoa. This is Creatine kinase S-type, mitochondrial (CKMT2) from Gallus gallus (Chicken).